Reading from the N-terminus, the 1364-residue chain is MNISSMLSNDSNTASQDVGGNFDDSQRNNDKGGSQDANSKKMGTGEAEDHANGNASVEGNGIANHGSATNGNTKGTDDSSNVNIVESIIPKPIRPTRSSIESDEEDVGKNYNSIISNDSEHISQRYLENFEDKVNAINKIDQVLIKGNNMRVLNQEEENLNILIRNSGEIAENYIDRVVTEDISSKANILNGKDSVGKEFKWGSTRDMKKRELELEVDNASKADTAAKKGGNKSKQGATKSTPAKKAKAKPKRKPSATDDTSEESQLGKKRKTRAGSVSGASQNDEKSANGKVKLKLTLKDQAEEDSASADAASKVTTKEQKIITKQYDNTFVSIWKDLSRKDGPKVSRLMQQSTQAKMINLKKTSILAAREAKRWQLKNNRNQKDLTTKARRAMREMFNFWKRNERIERELRKKHEKEILDKAKKEEEERESKRQSRKLNFLITQTELYSHFIGKKIKTDEFEGTDSDPNANFKSANHHYDKYSNIDGEGKDFNSIDFDNEDEESLNKAAAVNAQIALEAAKTKAQAFDNDPLKNPDTNGEEMNFQNPTLLGDINISQPDLLKCTLKEYQVKGLNWLANLYEQGINGILADEMGLGKTVQSISVLAYLAETHNIWGPFLVVTPASTLHNWQQEISRFVPEFKVIPYWGNAKDRKVLRKFWDRKNFRYGKDAPFHVLVTSYQLVVADAAYFQKMKWQYMILDEAQAIKSSQSSRWKSLLSFSCRNRLLLTGTPIQNSMQELWALLHFIMPSLFDSHDEFSDWFSKDIESHAQSNTELNEQQLRRLHVILKPFMLRRIKKNVQSELGDKLEIDVFCDLTHRQKKYYQMLTSQISIMDLLDSANNSSDDSAQSLMNLVMQFRKVCNHPDLFERADVKSSFAFGRFAETSSFLRETNELEMSYSTENLIKYNMPRIVYEEILQPTFDNDVGSRKKINNMFNIYHPSNIANDELENFSWLRFVDQSPQEMNNLSKQNIIERAINNREYSDINYERINRLKYTYDEDNESFLPNSKLLLINELQNNHALISNSTYLKELYSIKKKVYEDMVINNMKPAAEPLVKAPPVAVVCDNISFVHDLQDSLFDPKIRSSLMPLPFNRELELLKSSIPITEYPKSNMLPNAINKFIDYSNIRMPSMNRFITESGKLSKLDELLVDLRQNDHRVLIYFQMTKMMDLMEEYLTYRQHKYIRLDGSSKLDDRRDLVHDWQTKPEIFVFLLSTRAGGLGINLTAADTVIFYDSDWNPTIDSQAMDRAHRLGQTRQVTVYRLLTRGTIEERMRDRAKQKEQVQQVVMEGKSAIANKEESGNKKKDVAFLLLGNDDSSAAALNDDSEEKQNLQDSKKSQAKNLEDMYHEGEGEFSGNVTPSL.

2 stretches are compositionally biased toward polar residues: residues 1 to 18 (MNISSMLSNDSNTASQDV) and 66 to 84 (GSATNGNTKGTDDSSNVNI). 2 disordered regions span residues 1-84 (MNIS…NVNI) and 213-293 (LELE…NGKV). The segment covering 213–227 (LELEVDNASKADTAA) has biased composition (basic and acidic residues). Residues 243 to 255 (PAKKAKAKPKRKP) show a composition bias toward basic residues. The DBINO domain maps to 335 to 460 (IWKDLSRKDG…SHFIGKKIKT (126 aa)). The Helicase ATP-binding domain occupies 579–751 (ANLYEQGING…WALLHFIMPS (173 aa)). 592 to 599 (DEMGLGKT) contacts ATP. Residues 702–705 (DEAQ) carry the DEAQ box motif. The Helicase C-terminal domain maps to 1146–1302 (KLDELLVDLR…KSAIANKEES (157 aa)). Positions 1321–1364 (AAALNDDSEEKQNLQDSKKSQAKNLEDMYHEGEGEFSGNVTPSL) are disordered. Residues 1330-1353 (EKQNLQDSKKSQAKNLEDMYHEGE) show a composition bias toward basic and acidic residues.

It belongs to the SNF2/RAD54 helicase family. As to quaternary structure, component of the INO80 chromatin-remodeling complex.

The protein resides in the nucleus. The catalysed reaction is ATP + H2O = ADP + phosphate + H(+). ATPase component of the INO80 complex which remodels chromatin by shifting nucleosomes and is involved in DNA repair. This Debaryomyces hansenii (strain ATCC 36239 / CBS 767 / BCRC 21394 / JCM 1990 / NBRC 0083 / IGC 2968) (Yeast) protein is Chromatin-remodeling ATPase INO80 (INO80).